Reading from the N-terminus, the 463-residue chain is Zinc finger protein interacting with ribonucleoprotein K (463 aa).

The KRAB domain occupies V14–V89. Disordered regions lie at residues H106 to E128 and K171 to G211. Over residues K174 to E191 the composition is skewed to basic and acidic residues. Over residues C192–T201 the composition is skewed to polar residues. 9 consecutive C2H2-type zinc fingers follow at residues Y215 to H237, W243 to H265, Y271 to H293, Y299 to H321, Y327 to H349, Y355 to H377, Y383 to H405, Y411 to H433, and Y439 to H461.

Belongs to the krueppel C2H2-type zinc-finger protein family. In terms of assembly, interacts with HNRPK. Expressed in ovary and liver, and at lower levels in brain and muscle.

It is found in the nucleus. Its function is as follows. May be a transcriptional repressor. In Mus musculus (Mouse), this protein is Zinc finger protein interacting with ribonucleoprotein K (Zik1).